A 100-amino-acid polypeptide reads, in one-letter code: Small ribosomal subunit protein uS14c (100 aa).

The tract at residues 1–22 is disordered; that stretch reads MARKGLIQRENKRQKLEQKYHS. The span at 7-20 shows a compositional bias: basic and acidic residues; sequence IQRENKRQKLEQKY.

It belongs to the universal ribosomal protein uS14 family. As to quaternary structure, part of the 30S ribosomal subunit.

Its subcellular location is the plastid. The protein resides in the chloroplast. Binds 16S rRNA, required for the assembly of 30S particles. This is Small ribosomal subunit protein uS14c from Daucus carota (Wild carrot).